Consider the following 288-residue polypeptide: ATP synthase gamma chain (288 aa).

It belongs to the ATPase gamma chain family. As to quaternary structure, F-type ATPases have 2 components, CF(1) - the catalytic core - and CF(0) - the membrane proton channel. CF(1) has five subunits: alpha(3), beta(3), gamma(1), delta(1), epsilon(1). CF(0) has three main subunits: a, b and c.

Its subcellular location is the cell inner membrane. Produces ATP from ADP in the presence of a proton gradient across the membrane. The gamma chain is believed to be important in regulating ATPase activity and the flow of protons through the CF(0) complex. The sequence is that of ATP synthase gamma chain from Vibrio cholerae serotype O1 (strain ATCC 39541 / Classical Ogawa 395 / O395).